Here is a 131-residue protein sequence, read N- to C-terminus: Fumarate reductase subunit C (131 aa).

The next 3 membrane-spanning stretches (helical) occupy residues 30–50 (EGTAVPTVWFSIVLIYGLFAL), 61–81 (IGFLQNPVVVILNLITLAAAL), and 110–130 (IKGLWVVTAVVTVVILFVALF).

The protein belongs to the FrdC family. As to quaternary structure, part of an enzyme complex containing four subunits: a flavoprotein (FrdA), an iron-sulfur protein (FrdB), and two hydrophobic anchor proteins (FrdC and FrdD).

It localises to the cell inner membrane. Its function is as follows. Two distinct, membrane-bound, FAD-containing enzymes are responsible for the catalysis of fumarate and succinate interconversion; fumarate reductase is used in anaerobic growth, and succinate dehydrogenase is used in aerobic growth. Anchors the catalytic components of the fumarate reductase complex to the cell inner membrane, binds quinones. This chain is Fumarate reductase subunit C, found in Klebsiella pneumoniae (strain 342).